An 868-amino-acid chain; its full sequence is Probable inorganic carbon transporter subunit DabA (868 aa).

Zn(2+)-binding residues include Cys-392, Asp-394, His-574, and Cys-589.

Belongs to the inorganic carbon transporter (TC 9.A.2) DabA family. In terms of assembly, forms a complex with DabB. Zn(2+) serves as cofactor.

The protein localises to the cell membrane. Its function is as follows. Part of an energy-coupled inorganic carbon pump. In Bacillus cereus (strain G9842), this protein is Probable inorganic carbon transporter subunit DabA.